Consider the following 394-residue polypeptide: MNTMRPRHLNQRGKPVSRPISLYDKWLIGAVFGLLIIGLMMVASSSVMISTKYFHQPFHFLIRQACYLFVGLLLALIVVRTDSSFWEKISMPMMIGCVFLLLIVLIPGIGKSVNGSRRWLALGPIGVQVSELTKLAMIFYLSGYLVRQQEAVCESIFGFIKPMAILAVVSVLLLLEPDFGATVVISGTVMAMLFLAGVKLRYYFGLMLVVVTALALLAVSSPYRVARLTAFLDPWADQYNSGYQLTQSLIAFGRGGWFGTGLGESIQKLLYLPEAHTDFLFAVIAEELGLFGILVVITLYSILVIRGLNIGYTAYTQERHFASYTAYGLTIWLALQASINMGVNAGLLPTKGLTLPLLSYGGASMVINCIVIALLLRIDHENRWQSLGLRPLTA.

Residues 1–26 lie on the Cytoplasmic side of the membrane; it reads MNTMRPRHLNQRGKPVSRPISLYDKW. A helical membrane pass occupies residues 27–47; it reads LIGAVFGLLIIGLMMVASSSV. The Periplasmic portion of the chain corresponds to 48–57; it reads MISTKYFHQP. A helical membrane pass occupies residues 58–78; the sequence is FHFLIRQACYLFVGLLLALIV. Topologically, residues 79 to 88 are cytoplasmic; it reads VRTDSSFWEK. Residues 89–109 traverse the membrane as a helical segment; the sequence is ISMPMMIGCVFLLLIVLIPGI. Residues 110 to 118 are Periplasmic-facing; the sequence is GKSVNGSRR. A helical membrane pass occupies residues 119–139; the sequence is WLALGPIGVQVSELTKLAMIF. The Cytoplasmic segment spans residues 140–154; it reads YLSGYLVRQQEAVCE. The chain crosses the membrane as a helical span at residues 155 to 175; it reads SIFGFIKPMAILAVVSVLLLL. The Periplasmic segment spans residues 176–177; that stretch reads EP. A helical membrane pass occupies residues 178-198; that stretch reads DFGATVVISGTVMAMLFLAGV. Over 199–201 the chain is Cytoplasmic; it reads KLR. A helical transmembrane segment spans residues 202 to 222; the sequence is YYFGLMLVVVTALALLAVSSP. Topologically, residues 223-278 are periplasmic; sequence YRVARLTAFLDPWADQYNSGYQLTQSLIAFGRGGWFGTGLGESIQKLLYLPEAHTD. A helical membrane pass occupies residues 279–299; that stretch reads FLFAVIAEELGLFGILVVITL. Residues 300 to 327 lie on the Cytoplasmic side of the membrane; sequence YSILVIRGLNIGYTAYTQERHFASYTAY. A helical membrane pass occupies residues 328-348; sequence GLTIWLALQASINMGVNAGLL. The Periplasmic portion of the chain corresponds to 349-354; sequence PTKGLT. A helical transmembrane segment spans residues 355–375; sequence LPLLSYGGASMVINCIVIALL. The Cytoplasmic segment spans residues 376 to 394; it reads LRIDHENRWQSLGLRPLTA.

Belongs to the SEDS family. FtsW subfamily.

It localises to the cell inner membrane. It catalyses the reaction [GlcNAc-(1-&gt;4)-Mur2Ac(oyl-L-Ala-gamma-D-Glu-L-Lys-D-Ala-D-Ala)](n)-di-trans,octa-cis-undecaprenyl diphosphate + beta-D-GlcNAc-(1-&gt;4)-Mur2Ac(oyl-L-Ala-gamma-D-Glu-L-Lys-D-Ala-D-Ala)-di-trans,octa-cis-undecaprenyl diphosphate = [GlcNAc-(1-&gt;4)-Mur2Ac(oyl-L-Ala-gamma-D-Glu-L-Lys-D-Ala-D-Ala)](n+1)-di-trans,octa-cis-undecaprenyl diphosphate + di-trans,octa-cis-undecaprenyl diphosphate + H(+). It participates in cell wall biogenesis; peptidoglycan biosynthesis. Functionally, peptidoglycan polymerase that is essential for cell division. This chain is Probable peptidoglycan glycosyltransferase FtsW, found in Legionella pneumophila subsp. pneumophila (strain Philadelphia 1 / ATCC 33152 / DSM 7513).